A 290-amino-acid polypeptide reads, in one-letter code: Glycine--tRNA ligase alpha subunit (290 aa).

This sequence belongs to the class-II aminoacyl-tRNA synthetase family. Tetramer of two alpha and two beta subunits.

It localises to the cytoplasm. The enzyme catalyses tRNA(Gly) + glycine + ATP = glycyl-tRNA(Gly) + AMP + diphosphate. This chain is Glycine--tRNA ligase alpha subunit, found in Brachyspira hyodysenteriae (strain ATCC 49526 / WA1).